We begin with the raw amino-acid sequence, 387 residues long: Methyltransferase phomM' (387 aa).

A methyltransferase domain region spans residues 98–223; the sequence is PHRPKDLHIL…QSVADLFTTL (126 aa).

It belongs to the class I-like SAM-binding methyltransferase superfamily. Erg6/SMT family.

The protein operates within mycotoxin biosynthesis. Functionally, methyltransferase; part of the gene cluster that mediates the biosynthesis of the phomopsins, a group of hexapeptide mycotoxins which infects lupins and causes lupinosis disease in livestock. Within the pathway, phomM' acts as an S-adenosylmethionine-dependent alpha-N-methyltransferase that catalyzes two successive N-methylation reactions, converting N-desmethyl-phomopsin A to phomopsin A and phomopsin A further to an N,N-dimethylated congener called phomopsin E. The pathway starts with the processing of the precursor phomA' by several endopeptidases including kexin proteases as well as the cluster-specific S41 family peptidase phomP1 and the oligopeptidase phomG' to produce 10 identical copies of the hexapeptide Tyr-Val-Ile-Pro-Ile-Asp. After being excised from the precursor peptide, the core peptides are cyclized and modified post-translationally by enzymes encoded within the gene cluster. The timing and order of proteolysis of the phomA' precursor and PTMs are still unknown. Two tyrosinase-like enzymes, phomQ1' and phomQ2, catalyze the chlorination and hydroxylation of Tyr, respectively. PhomYb, is proposed to be involved in the construction of the macrocyclic structure. The other 4 ustYa family proteins may be involved in PTMs that generate the unique structure of phomopsin A. PhomYa' is required for the hydroxylation of C-beta of Tyr. PhomYc', phomYd', and phomYe are responsible for the biosynthesis of 2,3-dehydroisoleucine (dIle), 2,3-dehydroaspartic acid (dAsp), and 3,4-dehydroproline (dPro), respectively. While dIle formation by phomYc' is indispensable for the installation of dAsp by phomYd', the order of the other PTMs have not been elucidated yet. Most of the biosynthetic enzymes likely have broad substrate specificity, and thus, there might be a metabolic grid from a precursor to phomopsin A. The enzyme(s) responsible for the biosynthesis of 3,4-dehydrovaline (dVal) have also not been identified yet. Finally, phomM' acts as an S-adenosylmethionine-dependent alpha-N-methyltransferase that catalyzes two successive N-methylation reactions, converting N-desmethyl-phomopsin A to phomopsin A and phomopsin A further to an N,N-dimethylated congener called phomopsin E. The polypeptide is Methyltransferase phomM' (Diaporthe leptostromiformis (Lupinosis disease fungus)).